Here is a 647-residue protein sequence, read N- to C-terminus: MEVRVEGQMVEGQAGDSVAAILQKALSGKKFKAVVAARALDSAEELLDLSSPVPAGCTGIEPVYADSPEGLQILRHSTAHVMAAAVKQLFPKTRVTIGPSIESGFYYDFDVEKPFSSEDFSAIEAEMQRIANAREPFTREVLSRAEAIERFKAMGEDYKVEIIEGIDADTVSVYTCSGFADLCRGPHVPHTGFAKASKLMSVAGAYWRGDEKNRMLSRIYGTAFADEKALAAYLKQMEEAKRRDHRKLGRELSLFTFKEDVAPGMVFWLPKGMLVRTILEDFWRKEHLKRGYDIVQGPQLLRVETWQKSGHYDHYRENMYFTQIEEDAYGVKPMNCISHMLIYGNELHSYRDLPQRYFELGVVHRHEKSGVLHGLLRVRQFTQDDAHIICAPEQLEGEILEVIHLIRDLMNLFGFEYKVAVSTRPESSIGTDEAWEMATSALVQAVEKAGLPYTINEGDGAFYGPKIDVRLLDCIGREWQCSTIQVDFTLPERFDLTYVGQDGERHRPVMVHRAIMGSLERFIGILVENFAGALPTWLAPEQARLLTVTEAGDEAVSSMLEEFKALGIRAQADTRNEKLGFKVREAQLAKVPYILVVGEKEVQAGGANVRLRNGDNLGLKSVAEIAALIRTDAEEPFKQGGMRYSFA.

One can recognise a TGS domain in the interval 1-63 (MEVRVEGQMV…PAGCTGIEPV (63 aa)). A catalytic region spans residues 244–535 (DHRKLGRELS…LVENFAGALP (292 aa)). Residues Cys336, His387, and His512 each contribute to the Zn(2+) site.

This sequence belongs to the class-II aminoacyl-tRNA synthetase family. In terms of assembly, homodimer. Zn(2+) serves as cofactor.

Its subcellular location is the cytoplasm. It catalyses the reaction tRNA(Thr) + L-threonine + ATP = L-threonyl-tRNA(Thr) + AMP + diphosphate + H(+). In terms of biological role, catalyzes the attachment of threonine to tRNA(Thr) in a two-step reaction: L-threonine is first activated by ATP to form Thr-AMP and then transferred to the acceptor end of tRNA(Thr). Also edits incorrectly charged L-seryl-tRNA(Thr). The chain is Threonine--tRNA ligase from Desulfovibrio desulfuricans (strain ATCC 27774 / DSM 6949 / MB).